Consider the following 560-residue polypeptide: Synaptotagmin-5 (560 aa).

A helical transmembrane segment spans residues 2–22; the sequence is GFIVGVVIGLLVGIAIIIGFV. The SMP-LTD domain maps to 67-249; sequence ERQKLTWLNH…WPVRKVIPII (183 aa). Positions 227-523 are phospholipid binding; it reads EETIRDAVED…YIGRCILTLT (297 aa). C2 domains are found at residues 243–364 and 417–535; these read RKVI…DVWL and TTDE…KDWY. Ca(2+) is bound by residues aspartate 278, aspartate 284, aspartate 334, glutamate 336, aspartate 451, aspartate 457, aspartate 506, aspartate 508, and aspartate 513.

It belongs to the synaptotagmin family. Ca(2+) is required as a cofactor.

The protein localises to the membrane. In terms of biological role, may be involved in membrane trafficking. The sequence is that of Synaptotagmin-5 (SYT5) from Arabidopsis thaliana (Mouse-ear cress).